The chain runs to 90 residues: Antitoxin epsilon (90 aa).

The protein belongs to the epsilon antitoxin family. As to quaternary structure, in the presence of the zeta toxin, forms an inactive PezA(2)PezT(2) heterotetramer. The heterotetramer is still able to bind the zeta toxin substrate UNAG.

Functionally, antitoxin component of a type II toxin-antitoxin (TA) system. Neutralizes the toxic effect of cognate zeta toxin. Part of a postsegregational killing (PSK) system involved in the killing of plasmid-free cells. Continuous synthesis of the epsilon antitoxin is required to counteract the zeta toxin. The chain is Antitoxin epsilon from Streptococcus pyogenes.